Consider the following 660-residue polypeptide: Putative ABC transporter ATP-binding MG390 (660 aa).

Positions Gln-6–Val-126 constitute a Peptidase C39 domain. The active site involves Cys-12. Helical transmembrane passes span Leu-150–Thr-170, Leu-188–Ile-208, Tyr-265–Ile-285, Phe-290–Phe-310, Ser-379–Glu-399, and Tyr-402–Thr-422. One can recognise an ABC transporter domain in the interval Ile-464–Leu-657. Gly-494–Ser-501 lines the ATP pocket.

This sequence belongs to the ABC transporter superfamily.

It localises to the cell membrane. This Mycoplasma genitalium (strain ATCC 33530 / DSM 19775 / NCTC 10195 / G37) (Mycoplasmoides genitalium) protein is Putative ABC transporter ATP-binding MG390.